The primary structure comprises 546 residues: Chaperonin GroEL (546 aa).

ATP-binding positions include 30 to 33, Lys-51, 87 to 91, Gly-415, and Asp-495; these read TLGP and DGTTT.

The protein belongs to the chaperonin (HSP60) family. As to quaternary structure, forms a cylinder of 14 subunits composed of two heptameric rings stacked back-to-back. Interacts with the co-chaperonin GroES.

It localises to the cytoplasm. It carries out the reaction ATP + H2O + a folded polypeptide = ADP + phosphate + an unfolded polypeptide.. In terms of biological role, together with its co-chaperonin GroES, plays an essential role in assisting protein folding. The GroEL-GroES system forms a nano-cage that allows encapsulation of the non-native substrate proteins and provides a physical environment optimized to promote and accelerate protein folding. This chain is Chaperonin GroEL, found in Brucella melitensis biotype 1 (strain ATCC 23456 / CCUG 17765 / NCTC 10094 / 16M).